The sequence spans 315 residues: Long form salivary protein D7L2 (315 aa).

A signal peptide spans 1 to 18 (MIVAPVVLSIFLQLFVQA). Disulfide bonds link Cys-37–Cys-73, Cys-69–Cys-128, Cys-178–Cys-211, and Cys-252–Cys-263.

This sequence belongs to the PBP/GOBP family. In terms of assembly, interacts with host coagulation factor XII/F12 (inactive and activated). Interacts with host coagulation factor XI/F11 (inactive).

The protein localises to the secreted. In terms of biological role, modulates blood feeding of female mosquitoes on vertebrate species by binding and sequestering different mediators involved in the host response. Binds leukotriene B4 and leukotriene D4. Exhibits anticoagulant activity targeting the intrinsic coagulation pathway; binds coagulation factors XII and XI, preventing generation of activated FXIIa and FXIa. The polypeptide is Long form salivary protein D7L2 (Anopheles gambiae (African malaria mosquito)).